Reading from the N-terminus, the 310-residue chain is Serine/threonine-protein kinase pim-2 (310 aa).

One can recognise a Protein kinase domain in the interval Y30–M290. Residues L36 to V44 and K59 contribute to the ATP site. The active-site Proton acceptor is D167.

The protein belongs to the protein kinase superfamily. CAMK Ser/Thr protein kinase family. PIM subfamily. Post-translationally, autophosphorylated.

It catalyses the reaction L-seryl-[protein] + ATP = O-phospho-L-seryl-[protein] + ADP + H(+). The catalysed reaction is L-threonyl-[protein] + ATP = O-phospho-L-threonyl-[protein] + ADP + H(+). In terms of biological role, proto-oncogene with serine/threonine kinase activity involved in cell survival and cell proliferation. The protein is Serine/threonine-protein kinase pim-2 (pim2) of Danio rerio (Zebrafish).